The sequence spans 24 residues: Small ribosomal subunit protein uS5 (24 aa).

It belongs to the universal ribosomal protein uS5 family. As to quaternary structure, part of the 30S ribosomal subunit. Contacts proteins S4 and S8.

In terms of biological role, with S4 and S12 plays an important role in translational accuracy. Its function is as follows. Located at the back of the 30S subunit body where it stabilizes the conformation of the head with respect to the body. The chain is Small ribosomal subunit protein uS5 (rpsE) from Vibrio proteolyticus (Aeromonas proteolytica).